The primary structure comprises 145 residues: Large ribosomal subunit protein bL17 (145 aa).

The interval 123–145 (KRVDRKKKDPAKDKTEEKKLATA) is disordered.

Belongs to the bacterial ribosomal protein bL17 family. As to quaternary structure, part of the 50S ribosomal subunit. Contacts protein L32.

This chain is Large ribosomal subunit protein bL17, found in Pelagibacter ubique (strain HTCC1062).